Consider the following 325-residue polypeptide: Olfactory receptor 1S2 (325 aa).

Residues 1–38 (MKTLCSFLQISRNMHQENQTTITEFILLGLSNQAEHQN) lie on the Extracellular side of the membrane. Asn18 carries N-linked (GlcNAc...) asparagine glycosylation. Residues 39–62 (LLFVLFLSMYVVTVVGNGLIIVAI) form a helical membrane-spanning segment. Residues 63–70 (SLDIYLHT) lie on the Cytoplasmic side of the membrane. A helical membrane pass occupies residues 71 to 92 (PMYLFLAYLSFADISSISNSVP). Topologically, residues 93–113 (KMLVNIQTNSQSISYESCITQ) are extracellular. A disulfide bond links Cys110 and Cys202. Residues 114–133 (MYFSIVFVVTDNLLLGTMAF) form a helical membrane-spanning segment. The Cytoplasmic segment spans residues 134-152 (DHFVAICHPLNYTTFMRAR). Residues 153 to 171 (FGTLLTVISWFLSNIIALT) traverse the membrane as a helical segment. Residues 172–208 (HTLLLIQLLFCDHNTLPHFFCDLAPLLKLSCSDTMIN) are Extracellular-facing. Residues 209 to 232 (ELVLFIVGLSVIIFPFVLIFFSYV) form a helical membrane-spanning segment. The Cytoplasmic portion of the chain corresponds to 233–249 (CIIRAVLGVSSTQGKWK). A helical transmembrane segment spans residues 250 to 272 (AFSTCGSHLTIALLFYGTTVGVY). Over 273–285 (FFPSSTHPEDTDK) the chain is Extracellular. A helical transmembrane segment spans residues 286 to 305 (IGAVLFTVVTPMMNPFIYSL). The Cytoplasmic segment spans residues 306–325 (RNKDMKGALRKLINRKISSL).

It belongs to the G-protein coupled receptor 1 family.

It is found in the cell membrane. Functionally, odorant receptor. The protein is Olfactory receptor 1S2 (OR1S2) of Homo sapiens (Human).